A 262-amino-acid chain; its full sequence is UPF0758 protein BTH_I0781 (262 aa).

The interval M1–R45 is disordered. Residues V22 to A43 are compositionally biased toward low complexity. The MPN domain maps to L140–I262. Positions 211, 213, and 224 each coordinate Zn(2+). Residues H211–D224 carry the JAMM motif motif.

Belongs to the UPF0758 family.

The chain is UPF0758 protein BTH_I0781 from Burkholderia thailandensis (strain ATCC 700388 / DSM 13276 / CCUG 48851 / CIP 106301 / E264).